Reading from the N-terminus, the 156-residue chain is Small ribosomal subunit protein uS7 (156 aa).

The protein belongs to the universal ribosomal protein uS7 family. Part of the 30S ribosomal subunit. Contacts proteins S9 and S11.

In terms of biological role, one of the primary rRNA binding proteins, it binds directly to 16S rRNA where it nucleates assembly of the head domain of the 30S subunit. Is located at the subunit interface close to the decoding center, probably blocks exit of the E-site tRNA. This Aliivibrio salmonicida (strain LFI1238) (Vibrio salmonicida (strain LFI1238)) protein is Small ribosomal subunit protein uS7.